Consider the following 150-residue polypeptide: Thyroid hormone-inducible hepatic protein (150 aa).

The tract at residues 83-105 (KVAGNEGSEAENEAAETEEAEED) is disordered. Residue S90 is modified to Phosphoserine. Over residues 90-105 (SEAENEAAETEEAEED) the composition is skewed to acidic residues.

Belongs to the SPOT14 family. In terms of assembly, homodimer. Heterodimer with MID1IP1. Interacts with THRB and PLAGL1. Highly expressed in liver, lactating mammary gland, epididymal, retroperitoneal and brown fat. Mainly expressed in tissues that synthesize triglycerides.

The protein localises to the nucleus. The protein resides in the cytoplasm. Functionally, plays a role in the regulation of lipogenesis, especially in lactating mammary gland. Important for the biosynthesis of triglycerides with medium-length fatty acid chains. May modulate lipogenesis by interacting with MID1IP1 and preventing its interaction with ACACA. May function as transcriptional coactivator. May modulate the transcription factor activity of THRB. The protein is Thyroid hormone-inducible hepatic protein (Thrsp) of Rattus norvegicus (Rat).